The primary structure comprises 279 residues: 4-hydroxy-3-methylbut-2-enyl diphosphate reductase (279 aa).

A [4Fe-4S] cluster-binding site is contributed by C12. Residues H40 and H70 each contribute to the (2E)-4-hydroxy-3-methylbut-2-enyl diphosphate site. H40 and H70 together coordinate dimethylallyl diphosphate. 2 residues coordinate isopentenyl diphosphate: H40 and H70. C92 lines the [4Fe-4S] cluster pocket. H119 is a binding site for (2E)-4-hydroxy-3-methylbut-2-enyl diphosphate. A dimethylallyl diphosphate-binding site is contributed by H119. Position 119 (H119) interacts with isopentenyl diphosphate. The active-site Proton donor is the E121. (2E)-4-hydroxy-3-methylbut-2-enyl diphosphate is bound at residue T151. [4Fe-4S] cluster is bound at residue C181. 4 residues coordinate (2E)-4-hydroxy-3-methylbut-2-enyl diphosphate: S209, S210, N211, and S251. The dimethylallyl diphosphate site is built by S209, S210, N211, and S251. The isopentenyl diphosphate site is built by S209, S210, N211, and S251.

The protein belongs to the IspH family. Requires [4Fe-4S] cluster as cofactor.

It carries out the reaction isopentenyl diphosphate + 2 oxidized [2Fe-2S]-[ferredoxin] + H2O = (2E)-4-hydroxy-3-methylbut-2-enyl diphosphate + 2 reduced [2Fe-2S]-[ferredoxin] + 2 H(+). The catalysed reaction is dimethylallyl diphosphate + 2 oxidized [2Fe-2S]-[ferredoxin] + H2O = (2E)-4-hydroxy-3-methylbut-2-enyl diphosphate + 2 reduced [2Fe-2S]-[ferredoxin] + 2 H(+). It functions in the pathway isoprenoid biosynthesis; dimethylallyl diphosphate biosynthesis; dimethylallyl diphosphate from (2E)-4-hydroxy-3-methylbutenyl diphosphate: step 1/1. The protein operates within isoprenoid biosynthesis; isopentenyl diphosphate biosynthesis via DXP pathway; isopentenyl diphosphate from 1-deoxy-D-xylulose 5-phosphate: step 6/6. Its function is as follows. Catalyzes the conversion of 1-hydroxy-2-methyl-2-(E)-butenyl 4-diphosphate (HMBPP) into a mixture of isopentenyl diphosphate (IPP) and dimethylallyl diphosphate (DMAPP). Acts in the terminal step of the DOXP/MEP pathway for isoprenoid precursor biosynthesis. This is 4-hydroxy-3-methylbut-2-enyl diphosphate reductase from Thermotoga neapolitana (strain ATCC 49049 / DSM 4359 / NBRC 107923 / NS-E).